The primary structure comprises 278 residues: Ribosomal RNA small subunit methyltransferase A (278 aa).

S-adenosyl-L-methionine-binding residues include Asn-18, Leu-20, Gly-45, Glu-66, Asp-89, and Asn-110.

This sequence belongs to the class I-like SAM-binding methyltransferase superfamily. rRNA adenine N(6)-methyltransferase family. RsmA subfamily.

It is found in the cytoplasm. The enzyme catalyses adenosine(1518)/adenosine(1519) in 16S rRNA + 4 S-adenosyl-L-methionine = N(6)-dimethyladenosine(1518)/N(6)-dimethyladenosine(1519) in 16S rRNA + 4 S-adenosyl-L-homocysteine + 4 H(+). In terms of biological role, specifically dimethylates two adjacent adenosines (A1518 and A1519) in the loop of a conserved hairpin near the 3'-end of 16S rRNA in the 30S particle. May play a critical role in biogenesis of 30S subunits. This chain is Ribosomal RNA small subunit methyltransferase A, found in Cupriavidus pinatubonensis (strain JMP 134 / LMG 1197) (Cupriavidus necator (strain JMP 134)).